Reading from the N-terminus, the 254-residue chain is Phosphonates import ATP-binding protein PhnC 2 (254 aa).

Residues 4 to 248 (LEVNNLGKHY…KIESIYGFQQ (245 aa)) enclose the ABC transporter domain. 37 to 44 (GPSGAGKS) provides a ligand contact to ATP.

The protein belongs to the ABC transporter superfamily. Phosphonates importer (TC 3.A.1.9.1) family. In terms of assembly, the complex is composed of two ATP-binding proteins (PhnC), two transmembrane proteins (PhnE) and a solute-binding protein (PhnD).

Its subcellular location is the cell membrane. It catalyses the reaction phosphonate(out) + ATP + H2O = phosphonate(in) + ADP + phosphate + H(+). In terms of biological role, part of the ABC transporter complex PhnCDE involved in phosphonates import. Responsible for energy coupling to the transport system. This is Phosphonates import ATP-binding protein PhnC 2 from Oceanobacillus iheyensis (strain DSM 14371 / CIP 107618 / JCM 11309 / KCTC 3954 / HTE831).